The chain runs to 497 residues: MSGDPGLEALKARVAEVPLGPEIEETGRIATLADGLVEVEGLPGARLGEVVRFAGGAEGLVLTLDPETVQVALLDPGAALGSGTEVRRTGQLLSVPVGQGLLGRVVDPLGRPLDGLPAILPEARLEIERPAPGIVDRDMVAEPVETGLLVVDALFAVGRGQRELIIGERATGKTSLAVDAIVNQAASDIVCFYVAIGQRTTAVRRVIETVREKGAFARTVFVVAPATASPGLRWIAPFAATSMAEWVRDRGGHALIVYDDLTKHAAVHRELALLARQPPGREAYPGDIFYLHARLLERSAKLSAVNGGGSLTALPIAEIEAGNLSAYIPTNLISIADGQIVTSAALFAANQRPAVDIGLSVSRVGGKAQRGALKAVAGRVRLDYAQYLEMKMFSRFGGFGDAALRARLARGERIGALLAQPRTTPLSTPVQVALLAALAEGALDDVPLEDLTRLKAALGPVLAADASLGPFCAAPDRLEPETRAALLACVRRAREAP.

An ATP-binding site is contributed by 167 to 174 (GERATGKT).

The protein belongs to the ATPase alpha/beta chains family. As to quaternary structure, F-type ATPases have 2 components, CF(1) - the catalytic core - and CF(0) - the membrane proton channel. CF(1) has five subunits: alpha(3), beta(3), gamma(1), delta(1), epsilon(1). CF(0) has four main subunits: a(1), b(1), b'(1) and c(9-12).

The protein localises to the cell inner membrane. It catalyses the reaction ATP + H2O + 4 H(+)(in) = ADP + phosphate + 5 H(+)(out). Produces ATP from ADP in the presence of a proton gradient across the membrane. The alpha chain is a regulatory subunit. This is ATP synthase subunit alpha 2 from Cereibacter sphaeroides (strain ATCC 17029 / ATH 2.4.9) (Rhodobacter sphaeroides).